A 398-amino-acid chain; its full sequence is Dihydrolipoyllysine-residue succinyltransferase component of 2-oxoglutarate dehydrogenase complex (398 aa).

The region spanning 2–77 (SIKIIIPSLG…TVGEEVGEIN (76 aa)) is the Lipoyl-binding domain. At Lys43 the chain carries N6-lipoyllysine. One can recognise a Peripheral subunit-binding (PSBD) domain in the interval 112-149 (ILAPSVQKLVTENKLDPNNIKGTGRGGRITKYDVLETI). Active-site residues include His369 and Asp373.

Belongs to the 2-oxoacid dehydrogenase family. In terms of assembly, forms a 24-polypeptide structural core with octahedral symmetry. Part of the 2-oxoglutarate dehydrogenase (OGDH) complex composed of E1 (2-oxoglutarate dehydrogenase), E2 (dihydrolipoamide succinyltransferase) and E3 (dihydrolipoamide dehydrogenase); the complex contains multiple copies of the three enzymatic components (E1, E2 and E3). Requires (R)-lipoate as cofactor.

It catalyses the reaction N(6)-[(R)-dihydrolipoyl]-L-lysyl-[protein] + succinyl-CoA = N(6)-[(R)-S(8)-succinyldihydrolipoyl]-L-lysyl-[protein] + CoA. It functions in the pathway amino-acid degradation; L-lysine degradation via saccharopine pathway; glutaryl-CoA from L-lysine: step 6/6. In terms of biological role, E2 component of the 2-oxoglutarate dehydrogenase (OGDH) complex which catalyzes the second step in the conversion of 2-oxoglutarate to succinyl-CoA and CO(2). This chain is Dihydrolipoyllysine-residue succinyltransferase component of 2-oxoglutarate dehydrogenase complex (sucB), found in Rickettsia typhi (strain ATCC VR-144 / Wilmington).